The sequence spans 565 residues: Phosphomethylpyrimidine synthase (565 aa).

Substrate-binding positions include Asn203, Met232, Tyr261, His297, 317–319 (SRG), 358–361 (DGLR), and Glu397. His401 is a Zn(2+) binding site. Tyr424 contacts substrate. A Zn(2+)-binding site is contributed by His465. [4Fe-4S] cluster contacts are provided by Cys541, Cys544, and Cys549.

It belongs to the ThiC family. The cofactor is [4Fe-4S] cluster.

It catalyses the reaction 5-amino-1-(5-phospho-beta-D-ribosyl)imidazole + S-adenosyl-L-methionine = 4-amino-2-methyl-5-(phosphooxymethyl)pyrimidine + CO + 5'-deoxyadenosine + formate + L-methionine + 3 H(+). It functions in the pathway cofactor biosynthesis; thiamine diphosphate biosynthesis. In terms of biological role, catalyzes the synthesis of the hydroxymethylpyrimidine phosphate (HMP-P) moiety of thiamine from aminoimidazole ribotide (AIR) in a radical S-adenosyl-L-methionine (SAM)-dependent reaction. The protein is Phosphomethylpyrimidine synthase of Bacteroides thetaiotaomicron (strain ATCC 29148 / DSM 2079 / JCM 5827 / CCUG 10774 / NCTC 10582 / VPI-5482 / E50).